The primary structure comprises 243 residues: TIGR03089 family protein (243 aa).

It belongs to the TIGR03089 family.

This is TIGR03089 family protein from Mycobacterium tuberculosis (strain ATCC 25618 / H37Rv).